Reading from the N-terminus, the 149-residue chain is Nucleoside diphosphate kinase (149 aa).

The ATP site is built by lysine 9, phenylalanine 57, arginine 85, threonine 91, arginine 102, and asparagine 112. Histidine 115 functions as the Pros-phosphohistidine intermediate in the catalytic mechanism.

It belongs to the NDK family. As to quaternary structure, homotetramer. Mg(2+) serves as cofactor.

The protein resides in the cytoplasm. It carries out the reaction a 2'-deoxyribonucleoside 5'-diphosphate + ATP = a 2'-deoxyribonucleoside 5'-triphosphate + ADP. The enzyme catalyses a ribonucleoside 5'-diphosphate + ATP = a ribonucleoside 5'-triphosphate + ADP. Major role in the synthesis of nucleoside triphosphates other than ATP. The ATP gamma phosphate is transferred to the NDP beta phosphate via a ping-pong mechanism, using a phosphorylated active-site intermediate. The protein is Nucleoside diphosphate kinase of Trichodesmium erythraeum (strain IMS101).